The chain runs to 469 residues: Putative multidrug resistance protein MdtD (469 aa).

Transmembrane regions (helical) follow at residues 8-28, 45-65, 68-88, 102-122, 134-154, 161-181, 191-211, 215-235, 263-283, 286-306, 338-358, 392-412, and 426-446; these read LWIVAFGFFMQTLDTTIVNTA, SVIVSYVLTVAVMLPASGWLA, VGVKWVFFSAIILFTLGSLLC, VIQGIGGAMMVPVGRLTVMKI, FVTLPGQIGPLVGPALGGFLV, WIFLINLPVGVVGALATLWLM, FDISGFIMLAIGMATLTLALD, GLGLPPLAIAGLILCGILALA, LIGSMSARIGSGMLPFMTPVF, IGLGFTPFHAGLMMIPMIIGS, LSFPLVALMGWTLLLPIVLFF, MVMQLSMSLGVSTAGILLGVF, and SAFLYSYICMAIIIALPALIF.

This sequence belongs to the major facilitator superfamily. TCR/Tet family.

Its subcellular location is the cell inner membrane. This is Putative multidrug resistance protein MdtD from Yersinia enterocolitica serotype O:8 / biotype 1B (strain NCTC 13174 / 8081).